Reading from the N-terminus, the 440-residue chain is Exodeoxyribonuclease 7 large subunit (440 aa).

The protein belongs to the XseA family. In terms of assembly, heterooligomer composed of large and small subunits.

The protein localises to the cytoplasm. It catalyses the reaction Exonucleolytic cleavage in either 5'- to 3'- or 3'- to 5'-direction to yield nucleoside 5'-phosphates.. Bidirectionally degrades single-stranded DNA into large acid-insoluble oligonucleotides, which are then degraded further into small acid-soluble oligonucleotides. This chain is Exodeoxyribonuclease 7 large subunit, found in Ralstonia nicotianae (strain ATCC BAA-1114 / GMI1000) (Ralstonia solanacearum).